The following is a 361-amino-acid chain: MDEEEAMLLLKEEDEGTRRTSVPTQLMKLKRTHWWILVFISIFFLISAQAIAVLLGRFYYNEGGNSKWISTLVQTCGFPILYLPLCFLPASHSSSSSCSFKTLVWIYLSLGFAIGLDNLLYSFGLLYLSASTYSILCSSQLAFNGVFSYYINSQKITCLILFSVLFLSVSAVLVSLDDDSNSPSGDSKWSYLIGCLCTVFASLIYSLQLSLMQFSFENVLKSETFSMVLEMQIYTSLVASCVAVIGLFASGEWMLLSVEMEEFHEGQVIYVLTLVGTAVSWQLGSVGAVALIFLVSSLFSNLIGTLSLIVTPLAAIAVFHDKLTEVKMVAMLIAFMGFGFYIYQNYLDDLKVQRAREAQAE.

Transmembrane regions (helical) follow at residues tryptophan 35–leucine 55, tryptophan 68–leucine 88, leucine 103–phenylalanine 123, serine 129–isoleucine 151, isoleucine 156–leucine 176, leucine 192–methionine 212, valine 238–valine 258, valine 268–alanine 288, valine 289–isoleucine 309, and leucine 323–tyrosine 343.

This sequence belongs to the purine permeases (TC 2.A.7.14) family.

It localises to the membrane. The polypeptide is Probable purine permease 13 (PUP13) (Arabidopsis thaliana (Mouse-ear cress)).